We begin with the raw amino-acid sequence, 284 residues long: Four and a half LIM domains protein 5 (284 aa).

The C4-type zinc finger occupies 8–32 (CQYCMASLLGKKYVLKDDNPYCVSC). LIM zinc-binding domains follow at residues 39–100 (NYCE…ECSS), 101–160 (KCFH…KEFA), 161–220 (HYCS…LYAK), and 223–283 (AACT…VDTD).

In terms of assembly, interacts with CREM (via the third LIM domain). Interacts (via second LIM domain) with SPAG8.

It is found in the nucleus. May be involved in the regulation of spermatogenesis. Stimulates CREM transcriptional activity in a phosphorylation-independent manner. The protein is Four and a half LIM domains protein 5 (FHL5) of Bos taurus (Bovine).